Consider the following 481-residue polypeptide: ATP synthase subunit beta (481 aa).

Residue 154–161 (GGAGVGKT) participates in ATP binding.

This sequence belongs to the ATPase alpha/beta chains family. As to quaternary structure, F-type ATPases have 2 components, CF(1) - the catalytic core - and CF(0) - the membrane proton channel. CF(1) has five subunits: alpha(3), beta(3), gamma(1), delta(1), epsilon(1). CF(0) has three main subunits: a(1), b(2) and c(9-12). The alpha and beta chains form an alternating ring which encloses part of the gamma chain. CF(1) is attached to CF(0) by a central stalk formed by the gamma and epsilon chains, while a peripheral stalk is formed by the delta and b chains.

It is found in the cell inner membrane. It catalyses the reaction ATP + H2O + 4 H(+)(in) = ADP + phosphate + 5 H(+)(out). Its function is as follows. Produces ATP from ADP in the presence of a proton gradient across the membrane. The catalytic sites are hosted primarily by the beta subunits. The polypeptide is ATP synthase subunit beta (Novosphingobium aromaticivorans (strain ATCC 700278 / DSM 12444 / CCUG 56034 / CIP 105152 / NBRC 16084 / F199)).